The chain runs to 176 residues: Peptide deformylase 2 (176 aa).

Residues cysteine 99 and histidine 141 each coordinate Fe cation. Residue glutamate 142 is part of the active site. Fe cation is bound at residue histidine 145.

Belongs to the polypeptide deformylase family. It depends on Fe(2+) as a cofactor.

The catalysed reaction is N-terminal N-formyl-L-methionyl-[peptide] + H2O = N-terminal L-methionyl-[peptide] + formate. In terms of biological role, removes the formyl group from the N-terminal Met of newly synthesized proteins. Requires at least a dipeptide for an efficient rate of reaction. N-terminal L-methionine is a prerequisite for activity but the enzyme has broad specificity at other positions. The sequence is that of Peptide deformylase 2 from Bordetella bronchiseptica (strain ATCC BAA-588 / NCTC 13252 / RB50) (Alcaligenes bronchisepticus).